We begin with the raw amino-acid sequence, 1485 residues long: MAGNFRFMMDQKDIVRFLTTTVDSFIQDRLINKEQRTQHKEQCAERLAAEDGSGDKDTEVEYSDQAVLANLDWGIEALEEAINTYNMETKLARLDYAEKMLQVCAMLNPKQKIAGVPNSYLSAWAHLNLSYLWKLRNNVQNCISHALEMFIVDPFFTRIDFAPELWKSLFLPHMSSIVGWYSEERHRLMMEVIPDSADLSFTADFEQFFNESLVLTMRPHQLEKLQKLEQLYGESLDENTKLYAKYYNDCMNSDSSSSKKAVPMLPIAEPPMTPLHELSRTIPDFVKFGPILPKSAGFSLAPRSKDVLNETIRENVTSSNLKEEKLSIWGAKDTIIEENEDDSDSELDNESVDSDDKNNIFSPGMKMMKYEGVETKVDLSCQRNQIPSPDIFSPLDSPRTAPNNSSPNPDMHSKRDSKFLRLSSSRIREPTISDSLTSSPDISIDNISNADNEVMVRNNIKRKNDSQTPSMNQDNENSLVLNDSSHCESEDGYQSSSSLPKLEKLSMGSKPPKDFVCPITGQIFCDPVTLETGQTYERKAIQEWLRTGNTTCPITRQPLSASILPKTNYVLKRLITSWKEQNPELAQEFSNVNTPRGSSCSPSAKDIPMLSTRQRTTDSPNHKNKDYARQRSNRFMPAAITTSPTSVLSQAAVETIVNSLKPYISSLCTSENLPECEEAVLKIARLLKDSKTNPQIHSYLSKPTIINGLVEILSASRNREVLRTSIYILSELIFTDDSVAETLNSVDSDFDCLATLLKNGLAEAALLIYQLRPVFAQLSAHELIPSLVDVIQNKNEELDDFQLVIDPKDAAIAILEQTLMGGDEYSRSLNASSVISANGIPTLVKYLERMEGRRSVVSVLLCCMQAEKSCKNLIANRIELSPVLELFHSGNDSVRGTCVEFLSELVQLNRRTSCNQLLHTIKDEGAFSTMHTFLVYLQMAPMEHQLAVASLLLQLDLLAEPRKMSIYREEAVETLIEALWQKDFSNTQMKALDALLFLIGHISSSGKSYTEAWLLKIAGFDQPYNALMKVEQLGQHDNDLIETMEDEKNALNSWQKRIASVLCNHENGSIFKALEECLKSNSLKMAKSCLVLATWLTRMLYTLPDTGVRDVARKSLLEEVIKVLHSSKSLEDMILVTLSLYPFISDPTVHEVLRVYAKSIYRILRKLKKYSTVAADILKALLNLNSVDVTELWSCKEVVELDLSSNGEVLSLHYLNGQVLSGLMDGTSKVCDARKRIPRVIQETHEHTKAVTSLCSSGDRLYSASLDKTIRVWTIKSDGIKCIDVYDIKEAVHELAANDKLACYVSQGTGVKVFNWSEAPKLINFSKYVKSLAVAGDKLYCGCSGYSIQEVDLSTYTSNSFFTGTRKLLGKQTIHSLQIHDDYLFACVSSVDATAGKIFSLSQKMVVGSLSTGLDIHRIAINSDFIFAGTKFGTIEVWLKDKFTRVASIQMAGGHTKITSLVSDVDGMMLFVGSSDGKIQVWALD.

Residues 337–353 (EENEDDSDSELDNESVD) show a composition bias toward acidic residues. 3 disordered regions span residues 337–363 (EENE…IFSP), 384–450 (NQIP…ISNA), and 462–507 (RKND…KLSM). The segment covering 438-450 (SSPDISIDNISNA) has biased composition (low complexity). Polar residues predominate over residues 466–484 (SQTPSMNQDNENSLVLNDS). One can recognise a U-box domain in the interval 510-585 (KPPKDFVCPI…TSWKEQNPEL (76 aa)). 4 WD repeats span residues 1194-1232 (SCKE…KVCD), 1246-1283 (EHTK…IKCI), 1409-1448 (SLST…RVAS), and 1454-1485 (GHTK…WALD).

It carries out the reaction S-ubiquitinyl-[E2 ubiquitin-conjugating enzyme]-L-cysteine + [acceptor protein]-L-lysine = [E2 ubiquitin-conjugating enzyme]-L-cysteine + N(6)-ubiquitinyl-[acceptor protein]-L-lysine.. Its pathway is protein modification; protein ubiquitination. Putative E3 ubiquitin-protein ligase involved in the rhizobial infection process. Plays an important role in the early steps of infection thread formation and in growth and differentiation of nodules. The protein is Putative E3 ubiquitin-protein ligase LIN-2 of Lotus japonicus (Lotus corniculatus var. japonicus).